The primary structure comprises 230 residues: LexA repressor (230 aa).

The segment at residues 28-48 (LREIGAHMGIRSTNGVNDHLR) is a DNA-binding region (H-T-H motif). Catalysis depends on for autocatalytic cleavage activity residues Ser-149 and Lys-186.

Belongs to the peptidase S24 family. In terms of assembly, homodimer.

The enzyme catalyses Hydrolysis of Ala-|-Gly bond in repressor LexA.. Functionally, represses a number of genes involved in the response to DNA damage (SOS response), including recA and lexA. In the presence of single-stranded DNA, RecA interacts with LexA causing an autocatalytic cleavage which disrupts the DNA-binding part of LexA, leading to derepression of the SOS regulon and eventually DNA repair. The protein is LexA repressor of Sorangium cellulosum (strain So ce56) (Polyangium cellulosum (strain So ce56)).